We begin with the raw amino-acid sequence, 479 residues long: Bifunctional protein HldE (479 aa).

The ribokinase stretch occupies residues 1–319 (MTVILPDFLK…NVVQKYEYTK (319 aa)). ATP is bound at residue 195 to 198 (NMSE). Asp-264 is an active-site residue. The cytidylyltransferase stretch occupies residues 346–479 (MTNGVFDILH…IDTMEINEIN (134 aa)).

It in the N-terminal section; belongs to the carbohydrate kinase PfkB family. This sequence in the C-terminal section; belongs to the cytidylyltransferase family. As to quaternary structure, homodimer.

The enzyme catalyses D-glycero-beta-D-manno-heptose 7-phosphate + ATP = D-glycero-beta-D-manno-heptose 1,7-bisphosphate + ADP + H(+). It catalyses the reaction D-glycero-beta-D-manno-heptose 1-phosphate + ATP + H(+) = ADP-D-glycero-beta-D-manno-heptose + diphosphate. The protein operates within nucleotide-sugar biosynthesis; ADP-L-glycero-beta-D-manno-heptose biosynthesis; ADP-L-glycero-beta-D-manno-heptose from D-glycero-beta-D-manno-heptose 7-phosphate: step 1/4. Its pathway is nucleotide-sugar biosynthesis; ADP-L-glycero-beta-D-manno-heptose biosynthesis; ADP-L-glycero-beta-D-manno-heptose from D-glycero-beta-D-manno-heptose 7-phosphate: step 3/4. Its function is as follows. Catalyzes the phosphorylation of D-glycero-D-manno-heptose 7-phosphate at the C-1 position to selectively form D-glycero-beta-D-manno-heptose-1,7-bisphosphate. Functionally, catalyzes the ADP transfer from ATP to D-glycero-beta-D-manno-heptose 1-phosphate, yielding ADP-D-glycero-beta-D-manno-heptose. In Blochmanniella floridana, this protein is Bifunctional protein HldE.